The primary structure comprises 180 residues: Shikimate kinase (180 aa).

Residue 14–19 (GAGKST) participates in ATP binding. A Mg(2+)-binding site is contributed by S18. Residues D36, R60, and G82 each contribute to the substrate site. Position 120 (R120) interacts with ATP. R140 contacts substrate. An ATP-binding site is contributed by Q157.

This sequence belongs to the shikimate kinase family. In terms of assembly, monomer. It depends on Mg(2+) as a cofactor.

It localises to the cytoplasm. It carries out the reaction shikimate + ATP = 3-phosphoshikimate + ADP + H(+). It participates in metabolic intermediate biosynthesis; chorismate biosynthesis; chorismate from D-erythrose 4-phosphate and phosphoenolpyruvate: step 5/7. Functionally, catalyzes the specific phosphorylation of the 3-hydroxyl group of shikimic acid using ATP as a cosubstrate. The chain is Shikimate kinase from Haemophilus influenzae (strain PittEE).